The sequence spans 28 residues: Seed allergenic protein 1 (28 aa).

Residues 1–28 (VTXEEGXYSISDQSKVGEQXIRSPDREM) form a disordered region.

The protein is Seed allergenic protein 1 of Prunus dulcis (Almond).